The primary structure comprises 230 residues: NAD(P)H-hydrate epimerase (230 aa).

Positions 11–218 (AIDVDQELFT…ALQRKYELNL (208 aa)) constitute a YjeF N-terminal domain. 61 to 65 (NNGGD) is a binding site for (6S)-NADPHX. Asn-62 and Asp-126 together coordinate K(+). Residues 130–136 (GFSFKPP) and Asp-159 each bind (6S)-NADPHX. A K(+)-binding site is contributed by Ser-162.

The protein belongs to the NnrE/AIBP family. K(+) serves as cofactor.

It carries out the reaction (6R)-NADHX = (6S)-NADHX. It catalyses the reaction (6R)-NADPHX = (6S)-NADPHX. Functionally, catalyzes the epimerization of the S- and R-forms of NAD(P)HX, a damaged form of NAD(P)H that is a result of enzymatic or heat-dependent hydration. This is a prerequisite for the S-specific NAD(P)H-hydrate dehydratase to allow the repair of both epimers of NAD(P)HX. The chain is NAD(P)H-hydrate epimerase from Drosophila erecta (Fruit fly).